The following is a 940-amino-acid chain: Serine/threonine-protein phosphatase 1 regulatory subunit 10 (940 aa).

Residues 1–348 form an interaction with TOX4 region; that stretch reads MGSGPIDPKE…EPAPPSEAME (348 aa). Residues 73–147 form the TFIIS N-terminal domain; that stretch reads KLLNNWLTYS…SDWMAVIRSQ (75 aa). Disordered stretches follow at residues 147 to 210, 248 to 270, 304 to 400, and 534 to 557; these read QSST…KFRS, NVAA…NTTP, KIKK…KSVT, and VETL…LPPV. Composition is skewed to basic and acidic residues over residues 153–166 and 174–196; these read AEKD…EGKS and PLTE…EKPK. Lys179 participates in a covalent cross-link: Glycyl lysine isopeptide (Lys-Gly) (interchain with G-Cter in SUMO2). Thr256 is modified (phosphothreonine). Residue Lys262 forms a Glycyl lysine isopeptide (Lys-Gly) (interchain with G-Cter in SUMO2) linkage. Ser313 bears the Phosphoserine mark. Positions 325 to 336 are enriched in low complexity; sequence KTSTEPSTAKPS. Positions 357 to 433 are necessary for interaction with PPP1CA; that stretch reads PPVEVPELMD…NKIKDFGEAA (77 aa). Ser382 is modified (phosphoserine). Residues 393-408 form a necessary for interaction with PPP1CC region; sequence GRKRKSVTWPEEGKLR. A PP1-binding motif motif is present at residues 394-423; it reads RKRKSVTWPEEGKLREYFYFELDETERVNV. Ser398 carries the phosphoserine; by PKA modification. The tract at residues 418–619 is interaction with WDR82; the sequence is TERVNVNKIK…IKQMLVPHGL (202 aa). Over residues 540-551 the composition is skewed to gly residues; the sequence is GGSGGSPDGAGG. Ser545 and Ser591 each carry phosphoserine. A disordered region spans residues 617–905; the sequence is HGLLGPGPIA…HDGGHSHGGD (289 aa). The segment covering 644-655 has biased composition (pro residues); sequence PPGPGGPMPGPH. Arg665 carries the omega-N-methylarginine modification. Over residues 676 to 690 the composition is skewed to low complexity; it reads GDPFWDGPGDPMRGG. Omega-N-methylarginine occurs at positions 693 and 738. Gly residues-rich tracts occupy residues 725–763 and 789–844; these read ARGG…GMGN and GSMG…GSGG. 2 stretches are compositionally biased toward basic and acidic residues: residues 861–886 and 894–903; these read PHDV…HDGP and RGHDGGHSHG. The C3H1-type zinc-finger motif lies at 906–934; that stretch reads MSNRPVCRHFMMKGNCRYENNCAFYHPGV.

As to quaternary structure, component of the PNUTS-PP1 complex (also named PTW/PP1 complex), composed of PPP1R10/PNUTS, TOX4, WDR82, and PPP1CA (or PPP1CB or PPP1CC). In terms of processing, phosphorylated on Ser-398 by PKA within the region necessary for interaction with PPP1CA.

The protein localises to the nucleus. It is found in the chromosome. Functionally, substrate-recognition component of the PNUTS-PP1 protein phosphatase complex, a protein phosphatase 1 (PP1) complex that promotes RNA polymerase II transcription pause-release, allowing transcription elongation. Promoter-proximal pausing by RNA polymerase II is a transcription halt following transcription initiation but prior to elongation, which acts as a checkpoint to control that transcripts are favorably configured for transcriptional elongation. The PNUTS-PP1 complex mediates the release of RNA polymerase II from promoter-proximal region of genes by catalyzing dephosphorylation of proteins involved in transcription, such as AFF4, CDK9, MEPCE, INTS12, NCBP1, POLR2M/GDOWN1 and SUPT6H. The PNUTS-PP1 complex also regulates RNA polymerase II transcription termination by mediating dephosphorylation of SUPT5H in termination zones downstream of poly(A) sites, thereby promoting deceleration of RNA polymerase II transcription. PNUTS-PP1 complex is also involved in the response to replication stress by mediating dephosphorylation of POLR2A at 'Ser-5' of the CTD, promoting RNA polymerase II degradation. The PNUTS-PP1 complex also plays a role in the control of chromatin structure and cell cycle progression during the transition from mitosis into interphase. PNUTS-PP1 complex mediates dephosphorylation of MYC, promoting MYC stability by preventing MYC ubiquitination by the SCF(FBXW7) complex. In addition to acts as a substrate-recognition component, PPP1R10/PNUTS also acts as a nuclear targeting subunit for the PNUTS-PP1 complex. In some context, PPP1R10/PNUTS also acts as an inhibitor of protein phosphatase 1 (PP1) activity by preventing access to substrates, such as RB. The sequence is that of Serine/threonine-protein phosphatase 1 regulatory subunit 10 (PPP1R10) from Pan troglodytes (Chimpanzee).